The chain runs to 284 residues: MVLMIVSGRSGSGKSVALRALEDMGFYCVDNLPVVLLPDLARTLADREISAAVSIDVRNMPESPEIFEQAMSNLPDAFSPQLLFLDADRNTLIRRYSDTRRLHPLSNKNLSLESAIDKESDLLEPLRSRADLIVDTSEMSVHELAEMLRTRLLGKRERELTMVFESFGFKHGIPIDADYVFDVRFLPNPHWDPKLRPMTGLDKPVAAFLDRHTEVHNFIYQTRSYLELWLPMLETNNRSYLTVAIGCTGGKHRSVYIAEQLADYFRSRGKNVQSRHRTLEKRKP.

Position 8–15 (8–15) interacts with ATP; it reads GRSGSGKS. 56 to 59 provides a ligand contact to GTP; it reads DVRN. Residues 266-284 are RNA-binding; sequence RSRGKNVQSRHRTLEKRKP.

This sequence belongs to the RapZ-like family. RapZ subfamily. As to quaternary structure, homotrimer.

In terms of biological role, modulates the synthesis of GlmS, by affecting the processing and stability of the regulatory small RNA GlmZ. When glucosamine-6-phosphate (GlcN6P) concentrations are high in the cell, RapZ binds GlmZ and targets it to cleavage by RNase E. Consequently, GlmZ is inactivated and unable to activate GlmS synthesis. Under low GlcN6P concentrations, RapZ is sequestered and inactivated by an other regulatory small RNA, GlmY, preventing GlmZ degradation and leading to synthesis of GlmS. This chain is RNase adapter protein RapZ, found in Shigella dysenteriae serotype 1 (strain Sd197).